The sequence spans 301 residues: Ethylmalonyl-CoA decarboxylase (301 aa).

Lys211 bears the N6-acetyllysine; alternate mark. Lys211 is subject to N6-succinyllysine; alternate. The residue at position 295 (Lys295) is an N6-succinyllysine.

The protein belongs to the enoyl-CoA hydratase/isomerase family.

The protein resides in the cytoplasm. It localises to the cytosol. The enzyme catalyses (2S)-ethylmalonyl-CoA + H(+) = butanoyl-CoA + CO2. It carries out the reaction (S)-methylmalonyl-CoA + H(+) = propanoyl-CoA + CO2. The catalysed reaction is (2R)-ethylmalonyl-CoA + H(+) = butanoyl-CoA + CO2. Its function is as follows. Decarboxylates ethylmalonyl-CoA, a potentially toxic metabolite, to form butyryl-CoA, suggesting it might be involved in metabolite proofreading. Acts preferentially on (S)-ethylmalonyl-CoA but also has some activity on the (R)-isomer. Also has methylmalonyl-CoA decarboxylase activity at lower level. This is Ethylmalonyl-CoA decarboxylase (ECHDC1) from Pongo abelii (Sumatran orangutan).